The primary structure comprises 242 residues: Orotidine 5'-phosphate decarboxylase (242 aa).

Substrate contacts are provided by residues Asp-16, Lys-37, 64–73, Thr-128, Arg-190, Gln-199, Gly-219, and Arg-220; that span reads DLKFHDIPNT. Lys-66 serves as the catalytic Proton donor.

This sequence belongs to the OMP decarboxylase family. Type 1 subfamily. In terms of assembly, homodimer.

It catalyses the reaction orotidine 5'-phosphate + H(+) = UMP + CO2. The protein operates within pyrimidine metabolism; UMP biosynthesis via de novo pathway; UMP from orotate: step 2/2. Catalyzes the decarboxylation of orotidine 5'-monophosphate (OMP) to uridine 5'-monophosphate (UMP). The protein is Orotidine 5'-phosphate decarboxylase of Prochlorococcus marinus (strain MIT 9215).